A 464-amino-acid polypeptide reads, in one-letter code: ATP synthase subunit beta (464 aa).

153 to 160 (GGAGVGKT) contributes to the ATP binding site.

The protein belongs to the ATPase alpha/beta chains family. In terms of assembly, F-type ATPases have 2 components, CF(1) - the catalytic core - and CF(0) - the membrane proton channel. CF(1) has five subunits: alpha(3), beta(3), gamma(1), delta(1), epsilon(1). CF(0) has three main subunits: a(1), b(2) and c(9-12). The alpha and beta chains form an alternating ring which encloses part of the gamma chain. CF(1) is attached to CF(0) by a central stalk formed by the gamma and epsilon chains, while a peripheral stalk is formed by the delta and b chains.

Its subcellular location is the cell inner membrane. It carries out the reaction ATP + H2O + 4 H(+)(in) = ADP + phosphate + 5 H(+)(out). Its function is as follows. Produces ATP from ADP in the presence of a proton gradient across the membrane. The catalytic sites are hosted primarily by the beta subunits. The chain is ATP synthase subunit beta from Burkholderia cenocepacia (strain ATCC BAA-245 / DSM 16553 / LMG 16656 / NCTC 13227 / J2315 / CF5610) (Burkholderia cepacia (strain J2315)).